The following is a 125-amino-acid chain: Small ribosomal subunit protein uS12 (125 aa).

Aspartate 89 carries the 3-methylthioaspartic acid modification.

It belongs to the universal ribosomal protein uS12 family. As to quaternary structure, part of the 30S ribosomal subunit. Contacts proteins S8 and S17. May interact with IF1 in the 30S initiation complex.

With S4 and S5 plays an important role in translational accuracy. In terms of biological role, interacts with and stabilizes bases of the 16S rRNA that are involved in tRNA selection in the A site and with the mRNA backbone. Located at the interface of the 30S and 50S subunits, it traverses the body of the 30S subunit contacting proteins on the other side and probably holding the rRNA structure together. The combined cluster of proteins S8, S12 and S17 appears to hold together the shoulder and platform of the 30S subunit. This Clostridium acetobutylicum (strain ATCC 824 / DSM 792 / JCM 1419 / IAM 19013 / LMG 5710 / NBRC 13948 / NRRL B-527 / VKM B-1787 / 2291 / W) protein is Small ribosomal subunit protein uS12.